The sequence spans 545 residues: Pectinesterase/pectinesterase inhibitor (545 aa).

The first 37 residues, 1 to 37, serve as a signal peptide directing secretion; it reads MEINQPNLLEASKSCYSKITFFLLVISFAALVSTGFS. The tract at residues 38 to 191 is pectinesterase inhibitor; sequence SPELSLHHKI…ILRARTSLAI (154 aa). Residues 38-228 constitute a propeptide that is removed on maturation; the sequence is SPELSLHHKI…RRLLQTLGKD (191 aa). N-linked (GlcNAc...) asparagine glycosylation is present at asparagine 135. Positions 232–530 are pectinesterase; the sequence is DIVVAKDGSG…TVAELIQGGS (299 aa). Substrate contacts are provided by threonine 307 and glutamine 337. Cysteines 326 and 353 form a disulfide. Aspartate 360 functions as the Proton donor; for pectinesterase activity in the catalytic mechanism. The N-linked (GlcNAc...) (complex) asparagine glycan is linked to asparagine 375. Aspartate 381 (nucleophile; for pectinesterase activity) is an active-site residue. A disulfide bridge connects residues cysteine 394 and cysteine 428. Residues arginine 449 and tryptophan 451 each contribute to the substrate site.

It in the N-terminal section; belongs to the PMEI family. The protein in the C-terminal section; belongs to the pectinesterase family. In terms of processing, N-glycosylated.

It is found in the secreted. Its subcellular location is the cell wall. It catalyses the reaction [(1-&gt;4)-alpha-D-galacturonosyl methyl ester](n) + n H2O = [(1-&gt;4)-alpha-D-galacturonosyl](n) + n methanol + n H(+). The protein operates within glycan metabolism; pectin degradation; 2-dehydro-3-deoxy-D-gluconate from pectin: step 1/5. In terms of biological role, acts in the modification of cell walls via demethylesterification of cell wall pectin. This Ficus pumila var. awkeotsang (Jelly fig) protein is Pectinesterase/pectinesterase inhibitor.